The following is a 570-amino-acid chain: MNEKHPGPLVVEGKLTDAERMKLESNYLRGTIAEDLNDGLTGGFKGDNFLLIRFHGMYQQDDRDIRAERAEQKLEPRHAMLLRCRLPGGVITTKQWQAIDKFAGENTIYGSIRLTNRQTFQFHGILKKNVKPVHQMLHSVGLDALATANDMNRNVLCTSNPYESQLHAEAYEWAKKISEHLLPRTRAYAEIWLDQEKVATTDEEPILGQTYLPRKFKTTVVIPPQNDIDLHANDMNFVAIAENGKLVGFNLLVGGGLSIEHGNKKTYARTASEFGYLPLEHTLAVAEAVVTTQRDWGNRTDRKNAKTKYTLERVGVETFKAEVERRAGIKFEPIRPYEFTGRGDRIGWVKGIDDKWHLTLFIENGRILDYPGRPLKTGLLEIAKIHKGDFRITANQNLIIAGVPESEKAKIEKIAKESGLMNAVTPQRENSMACVSFPTCPLAMAEAERFLPSFIDNIDNLMAKHGVSDEHIVMRVTGCPNGCGRAMLAEVGLVGKAPGRYNLHLGGNRIGTRIPRMHKENITEPEILATLDELIGRWAKEREAGEGFGDFTVRAGIIRPVLDPARDLWD.

Cys434, Cys440, Cys479, and Cys483 together coordinate [4Fe-4S] cluster. A siroheme-binding site is contributed by Cys483.

This sequence belongs to the nitrite and sulfite reductase 4Fe-4S domain family. Alpha(8)-beta(8). The alpha component is a flavoprotein, the beta component is a hemoprotein. Siroheme is required as a cofactor. The cofactor is [4Fe-4S] cluster.

It carries out the reaction hydrogen sulfide + 3 NADP(+) + 3 H2O = sulfite + 3 NADPH + 4 H(+). The protein operates within sulfur metabolism; hydrogen sulfide biosynthesis; hydrogen sulfide from sulfite (NADPH route): step 1/1. Its function is as follows. Component of the sulfite reductase complex that catalyzes the 6-electron reduction of sulfite to sulfide. This is one of several activities required for the biosynthesis of L-cysteine from sulfate. This chain is Sulfite reductase [NADPH] hemoprotein beta-component, found in Escherichia fergusonii (strain ATCC 35469 / DSM 13698 / CCUG 18766 / IAM 14443 / JCM 21226 / LMG 7866 / NBRC 102419 / NCTC 12128 / CDC 0568-73).